The primary structure comprises 249 residues: GTP cyclohydrolase 1 type 2 homolog (249 aa).

A divalent metal cation contacts are provided by His-64, His-65, Asp-102, His-217, and Glu-221.

It belongs to the GTP cyclohydrolase I type 2/NIF3 family. Homohexamer.

This Neisseria meningitidis serogroup B (strain ATCC BAA-335 / MC58) protein is GTP cyclohydrolase 1 type 2 homolog.